We begin with the raw amino-acid sequence, 560 residues long: Developmental and secondary metabolism regulator veA (560 aa).

In terms of domain architecture, Velvet spans G35–R241. Residues E49–C54 carry the Nuclear localization signal motif. Disordered stretches follow at residues E49 to P70, K171 to G197, and D250 to Y560. Residues K171–E183 are compositionally biased toward basic and acidic residues. A compositionally biased stretch (pro residues) spans A336–P355. A compositionally biased stretch (basic and acidic residues) spans P395–R405. The span at Q411–L439 shows a compositional bias: pro residues. Residues I444–R453 show a composition bias toward polar residues. Positions P455–T496 are PEST. Residues A461–L479 show a composition bias toward low complexity. Basic and acidic residues-rich tracts occupy residues R508–D535 and R546–Y560.

The protein belongs to the velvet family. VeA subfamily. Component of the heterotrimeric velvet complex composed of laeA, veA and velB; VeA acting as a bridging protein between laeA and velB.

The protein localises to the nucleus. The protein resides in the cytoplasm. Functionally, component of the velvet transcription factor complex that controls sexual/asexual developmental ratio in response to light, promoting sexual development in the darkness while stimulating asexual sporulation under illumination. The velvet complex acts as a global regulator for secondary metabolite gene expression. Positively regulates chaetoglobosin A biosynthesis by controlling the expression of core genes of the chaetoglobosin A biosynthetic gene cluster and other relevant regulators in a light-dependent manner. VeA directly regulates transcription factors brlA, laeA, and the chaetoglobosin A cluster-specific transcription regulator cheR. Also directly regulates the expression of one of the chaetoglobosin A cluster cytochrome P450 monooxygenases (cheE or cheG), but only indirectly regulates the expression of the PKS-NRPS hybrid cheA. Moreover, VeA has a significant effect on the asexual spores production, irrespective of light or dark condition. In Chaetomium globosum (strain ATCC 6205 / CBS 148.51 / DSM 1962 / NBRC 6347 / NRRL 1970) (Soil fungus), this protein is Developmental and secondary metabolism regulator veA.